Here is a 160-residue protein sequence, read N- to C-terminus: Cyclic pyranopterin monophosphate synthase (160 aa).

Substrate contacts are provided by residues 75 to 77 and 115 to 116; these read MCH and ME. D130 is an active-site residue.

Belongs to the MoaC family. In terms of assembly, homohexamer; trimer of dimers.

It carries out the reaction (8S)-3',8-cyclo-7,8-dihydroguanosine 5'-triphosphate = cyclic pyranopterin phosphate + diphosphate. Its pathway is cofactor biosynthesis; molybdopterin biosynthesis. In terms of biological role, catalyzes the conversion of (8S)-3',8-cyclo-7,8-dihydroguanosine 5'-triphosphate to cyclic pyranopterin monophosphate (cPMP). This is Cyclic pyranopterin monophosphate synthase from Lysinibacillus sphaericus (strain C3-41).